The sequence spans 185 residues: MGQQVLKSSNEKMEKAVAAYSRELATVRAGRASSSVLDKVQVDYYGAPTPVVQLANITVPEARLLVIQPYDKTSIGDIEKAILKADLGLNPSNDGTVIRIAFPALTEERRRDLVKVVKKYAEEAKVAVRNVRRDGNDDLKKLEKAGEITEDDLRGYTEDIQKETDKYIAKVDEIAKNKEKEIMEV.

It belongs to the RRF family.

The protein resides in the cytoplasm. In terms of biological role, responsible for the release of ribosomes from messenger RNA at the termination of protein biosynthesis. May increase the efficiency of translation by recycling ribosomes from one round of translation to another. This Bacillus cereus (strain G9842) protein is Ribosome-recycling factor.